A 206-amino-acid chain; its full sequence is Proteasome subunit beta 1 (206 aa).

The propeptide at 1–5 is removed in mature form; by autocatalysis; that stretch reads MLMKG. Thr-6 serves as the catalytic Nucleophile.

This sequence belongs to the peptidase T1B family. The 20S proteasome core is composed of 14 alpha and 14 beta subunits that assemble into four stacked heptameric rings, resulting in a barrel-shaped structure. The two inner rings, each composed of seven catalytic beta subunits, are sandwiched by two outer rings, each composed of seven alpha subunits. The catalytic chamber with the active sites is on the inside of the barrel. Has a gated structure, the ends of the cylinder being occluded by the N-termini of the alpha-subunits. Is capped at one or both ends by the proteasome regulatory ATPase, PAN.

Its subcellular location is the cytoplasm. The catalysed reaction is Cleavage of peptide bonds with very broad specificity.. Its activity is regulated as follows. The formation of the proteasomal ATPase PAN-20S proteasome complex, via the docking of the C-termini of PAN into the intersubunit pockets in the alpha-rings, triggers opening of the gate for substrate entry. Interconversion between the open-gate and close-gate conformations leads to a dynamic regulation of the 20S proteasome proteolysis activity. Its function is as follows. Component of the proteasome core, a large protease complex with broad specificity involved in protein degradation. The polypeptide is Proteasome subunit beta 1 (Korarchaeum cryptofilum (strain OPF8)).